The sequence spans 111 residues: Large ribosomal subunit protein uL22 (111 aa).

The protein belongs to the universal ribosomal protein uL22 family. Part of the 50S ribosomal subunit.

Its function is as follows. This protein binds specifically to 23S rRNA; its binding is stimulated by other ribosomal proteins, e.g. L4, L17, and L20. It is important during the early stages of 50S assembly. It makes multiple contacts with different domains of the 23S rRNA in the assembled 50S subunit and ribosome. In terms of biological role, the globular domain of the protein is located near the polypeptide exit tunnel on the outside of the subunit, while an extended beta-hairpin is found that lines the wall of the exit tunnel in the center of the 70S ribosome. This is Large ribosomal subunit protein uL22 from Acholeplasma laidlawii.